The following is a 1318-amino-acid chain: Meiotically up-regulated gene 79 protein (1318 aa).

3 disordered regions span residues 177 to 198, 208 to 227, and 360 to 387; these read PVNS…SGSY, EEEL…IVVT, and PQAL…PPKG. Over residues 364-384 the composition is skewed to low complexity; it reads AAAESPTTKAPTTKAPTSEAP. The region spanning 1049-1158 is the PH domain; sequence MISYKKMVLS…WIHSLNFNAA (110 aa).

The protein localises to the nucleus. Functionally, appears to have a role in sporulation. This Schizosaccharomyces pombe (strain 972 / ATCC 24843) (Fission yeast) protein is Meiotically up-regulated gene 79 protein (mug79).